A 325-amino-acid polypeptide reads, in one-letter code: WUSCHEL-related homeobox 8 (325 aa).

The homeobox; WUS-type DNA-binding region spans 51–115; the sequence is DPKPRWNPKP…NRKSRAKHKL (65 aa).

This sequence belongs to the WUS homeobox family. Expressed only in the egg cell. Not detected in the pollen tube. Expressed in the zygote, the basal cell, and later the suspensor. Expressed in all suspensor cells, except the hypophysis, and in the embryo surrounding region (ESR) endosperm cells. Strongly expressed in the suspensor cells, with a weak expression also detected throughout the developing embryo.

Its subcellular location is the nucleus. Probable transcription factor, which may be involved in embryonic patterning. May be required for basal embryo development after fertilization. Acts partially redundantly with STIP in promoting embryonic cell division and proliferation. Promotes cotyledon boundary formation by maintaining the symmetry in CUC genes expression domains. The sequence is that of WUSCHEL-related homeobox 8 from Arabidopsis thaliana (Mouse-ear cress).